The chain runs to 333 residues: Eukaryotic translation initiation factor 2 subunit 2 (333 aa).

Disordered stretches follow at residues 1 to 120 (MSGD…LDIM) and 139 to 165 (ILEK…QTGP). Serine 2 is modified (N-acetylserine). Serine 2 carries the phosphoserine modification. Serine 13 is modified (phosphoserine; by PKC; in vitro). Over residues 13–22 (SKKKKKKKKP) the composition is skewed to basic residues. Position 36 is a phosphothreonine (threonine 36). Residues 40–51 (ETKEVEPEPTED) show a composition bias toward basic and acidic residues. Phosphoserine; by CK2 is present on serine 67. Basic and acidic residues predominate over residues 96-105 (EGVKDLKIEN). Lysine 102 participates in a covalent cross-link: Glycyl lysine isopeptide (Lys-Gly) (interchain with G-Cter in SUMO2). Acidic residues-rich tracts occupy residues 106–118 (DVQE…DDLD) and 139–149 (ILEKDEALEDE). Serine 158 carries the phosphoserine modification. The residue at position 218 (serine 218) is a Phosphoserine; by PKA; in vitro. Residues lysine 265 and lysine 293 each carry the N6-acetyllysine modification. Residues 281 to 305 (CHTCRSPDTILQKDTRLYFLQCETC) form a C4-type zinc finger.

This sequence belongs to the eIF-2-beta/eIF-5 family. In terms of assembly, eukaryotic translation initiation factor 2 eIF2 is a heterotrimeric complex composed of an alpha (EIF2S1), a beta (EIF2S2) and a gamma (EIF2S3) chain. eIF2 is member of the 43S pre-initiation complex (43S PIC). eIF2 forms a complex with at least CELF1/CUGBP1, CALR, CALR3, EIF2S1, EIF2S2, HSP90B1 and HSPA5. Interacts with BZW2/5MP1. Interacts with EIF5. In terms of processing, the N-terminus is blocked.

It localises to the cytoplasm. The protein resides in the cytosol. Component of the eIF2 complex that functions in the early steps of protein synthesis by forming a ternary complex with GTP and initiator tRNA. This complex binds to a 40S ribosomal subunit, followed by mRNA binding to form the 43S pre-initiation complex (43S PIC). Junction of the 60S ribosomal subunit to form the 80S initiation complex is preceded by hydrolysis of the GTP bound to eIF2 and release of an eIF2-GDP binary complex. In order for eIF2 to recycle and catalyze another round of initiation, the GDP bound to eIF2 must exchange with GTP by way of a reaction catalyzed by eIF2B. This is Eukaryotic translation initiation factor 2 subunit 2 (EIF2S2) from Oryctolagus cuniculus (Rabbit).